A 129-amino-acid polypeptide reads, in one-letter code: Small ribosomal subunit protein uS11 (129 aa).

It belongs to the universal ribosomal protein uS11 family. In terms of assembly, part of the 30S ribosomal subunit. Interacts with proteins S7 and S18. Binds to IF-3.

Functionally, located on the platform of the 30S subunit, it bridges several disparate RNA helices of the 16S rRNA. Forms part of the Shine-Dalgarno cleft in the 70S ribosome. This chain is Small ribosomal subunit protein uS11, found in Serratia proteamaculans (strain 568).